The sequence spans 617 residues: Probable potassium transport system protein Kup 3 (617 aa).

Transmembrane regions (helical) follow at residues valine 42–isoleucine 62, leucine 95–isoleucine 115, proline 129–methionine 149, isoleucine 160–isoleucine 180, valine 206–alanine 226, tryptophan 240–isoleucine 260, leucine 282–phenylalanine 302, isoleucine 330–phenylalanine 350, tyrosine 360–isoleucine 380, proline 386–alanine 406, and leucine 411–threonine 431.

It belongs to the HAK/KUP transporter (TC 2.A.72) family.

It localises to the cell inner membrane. It catalyses the reaction K(+)(in) + H(+)(in) = K(+)(out) + H(+)(out). Functionally, transport of potassium into the cell. Likely operates as a K(+):H(+) symporter. The sequence is that of Probable potassium transport system protein Kup 3 from Bradyrhizobium diazoefficiens (strain JCM 10833 / BCRC 13528 / IAM 13628 / NBRC 14792 / USDA 110).